The primary structure comprises 1070 residues: DNA-directed RNA polymerase subunit beta (1070 aa).

Belongs to the RNA polymerase beta chain family. In terms of assembly, in plastids the minimal PEP RNA polymerase catalytic core is composed of four subunits: alpha, beta, beta', and beta''. When a (nuclear-encoded) sigma factor is associated with the core the holoenzyme is formed, which can initiate transcription.

It is found in the plastid. It localises to the chloroplast. The catalysed reaction is RNA(n) + a ribonucleoside 5'-triphosphate = RNA(n+1) + diphosphate. In terms of biological role, DNA-dependent RNA polymerase catalyzes the transcription of DNA into RNA using the four ribonucleoside triphosphates as substrates. This is DNA-directed RNA polymerase subunit beta from Chaetosphaeridium globosum (Charophycean green alga).